The following is a 476-amino-acid chain: Glycogen synthase (476 aa).

Lys15 is an ADP-alpha-D-glucose binding site.

This sequence belongs to the glycosyltransferase 1 family. Bacterial/plant glycogen synthase subfamily.

It catalyses the reaction [(1-&gt;4)-alpha-D-glucosyl](n) + ADP-alpha-D-glucose = [(1-&gt;4)-alpha-D-glucosyl](n+1) + ADP + H(+). Its pathway is glycan biosynthesis; glycogen biosynthesis. Synthesizes alpha-1,4-glucan chains using ADP-glucose. The protein is Glycogen synthase of Streptococcus mutans serotype c (strain ATCC 700610 / UA159).